Here is a 304-residue protein sequence, read N- to C-terminus: Recombination-associated protein RdgC (304 aa).

Belongs to the RdgC family.

Its subcellular location is the cytoplasm. The protein localises to the nucleoid. Its function is as follows. May be involved in recombination. The protein is Recombination-associated protein RdgC of Shewanella putrefaciens (strain CN-32 / ATCC BAA-453).